The sequence spans 323 residues: Octaprenyl diphosphate synthase (323 aa).

Residues lysine 45, arginine 48, and histidine 77 each coordinate isopentenyl diphosphate. The Mg(2+) site is built by aspartate 84 and aspartate 88. Residue arginine 93 coordinates an all-trans-polyprenyl diphosphate. Arginine 94 provides a ligand contact to isopentenyl diphosphate. An all-trans-polyprenyl diphosphate-binding residues include lysine 170, threonine 171, and glutamine 208.

It belongs to the FPP/GGPP synthase family. Mg(2+) is required as a cofactor.

The enzyme catalyses 5 isopentenyl diphosphate + (2E,6E)-farnesyl diphosphate = all-trans-octaprenyl diphosphate + 5 diphosphate. Functionally, supplies octaprenyl diphosphate, the precursor for the side chain of the isoprenoid quinones ubiquinone and menaquinone. The chain is Octaprenyl diphosphate synthase (ispB) from Escherichia coli (strain K12).